A 631-amino-acid chain; its full sequence is KIF-binding protein (631 aa).

The span at 60 to 70 (EQGEAGDEADC) shows a compositional bias: acidic residues. The tract at residues 60–88 (EQGEAGDEADCESSQTADGEPEDGFEKTF) is disordered.

Belongs to the KIF-binding protein family. At 30 hpf, primarily expressed in central and peripheral neurons.

The protein localises to the cytoplasm. Its subcellular location is the cytoskeleton. Activator of KIF1B plus-end-directed microtubule motor activity. Required for organization of axonal microtubules, and axonal outgrowth and maintenance during peripheral and central nervous system development. This Danio rerio (Zebrafish) protein is KIF-binding protein (kifbp).